We begin with the raw amino-acid sequence, 435 residues long: Actin-like protein 7A (435 aa).

The disordered stretch occupies residues 1-64 (MWAPPAAIMG…TESKAAKERP (64 aa)). A compositionally biased stretch (low complexity) spans 20–31 (QAPLQTQALQTA). Positions 31–51 (ASLRDGPAKRAVWVRHTSSEP) are required for interaction with TES. A compositionally biased stretch (basic and acidic residues) spans 55–64 (TESKAAKERP).

This sequence belongs to the actin family. Interacts (via N-terminus) with TES (via LIM domain 2). Heterodimer with TES; the heterodimer interacts with ENAH to form a heterotrimer. Interacts with ACTL9. Interacts with CYLC1; the interaction may be relevant for proper acrosome attachment to the nuclear envelope. As to expression, strongly expressed in testis. Also expressed in other tissues.

The protein localises to the cytoplasm. It localises to the cytoskeleton. It is found in the golgi apparatus. Its subcellular location is the nucleus. The protein resides in the cytoplasmic vesicle. The protein localises to the secretory vesicle. It localises to the acrosome. In terms of biological role, essential for normal spermatogenesis and male fertility. Required for normal sperm head morphology, acroplaxome formation, acrosome attachment, and acrosome granule stability. May anchor and stabilize acrosomal adherence to the acroplaxome at least in part by facilitating the presence of F-actin in the subacrosomal space. May play an important role in formation and fusion of Golgi-derived vesicles during acrosome biogenesis. This chain is Actin-like protein 7A (ACTL7A), found in Homo sapiens (Human).